A 119-amino-acid polypeptide reads, in one-letter code: MIIGIGIDIIELNRIEKMLDGKLKFMERILTENERNVAMELKGSRLTEFVAGRFAAKEAYSKAVGTGIGKEVSFLDIEVKNDERGKPILITSTEHIVHLSISHSKEFAVAQVVLESSSR.

Residues aspartate 8 and glutamate 58 each coordinate Mg(2+).

This sequence belongs to the P-Pant transferase superfamily. AcpS family. Mg(2+) is required as a cofactor.

It localises to the cytoplasm. The enzyme catalyses apo-[ACP] + CoA = holo-[ACP] + adenosine 3',5'-bisphosphate + H(+). Functionally, transfers the 4'-phosphopantetheine moiety from coenzyme A to a Ser of acyl-carrier-protein. The polypeptide is Holo-[acyl-carrier-protein] synthase (Bacillus cereus (strain B4264)).